A 394-amino-acid chain; its full sequence is Protein TsgA homolog (394 aa).

12 helical membrane passes run 11–31 (WISF…GMVL), 51–71 (FLNA…EIVP), 76–96 (LIFG…SHSL), 101–121 (LCMF…TFLI), 135–155 (LFTD…AAAI), 163–183 (YWVY…ALCF), 205–225 (LGVA…LGFI), 245–265 (SVVG…SAIL), 273–293 (IVTA…NTTD), 299–319 (WIIM…ITLG), 333–353 (FILT…GPIV), and 362–382 (LATT…LGFV).

The protein belongs to the major facilitator superfamily. TsgA family.

The protein localises to the cell inner membrane. In Erwinia tasmaniensis (strain DSM 17950 / CFBP 7177 / CIP 109463 / NCPPB 4357 / Et1/99), this protein is Protein TsgA homolog.